The sequence spans 228 residues: MLVRIPQVLNAEQLAMLREQLDHAGDAWVDGRVTAGYSGAPVKFNQQIDERSEAAAQCQHLVLSALERNPLFISAVLPNIVYPPMFNRYSEGMTFGLHVDGGVRLHPHNGRKLRTDVSATLFLSDPASYDGGELQIEDTYGVHSVKLAAGDMVVYPSTSLHQVKPITRGVRVGCFFWIQSLIRDDGQRALLFDMDNAIQTLNQTNADERARRTLVGCYHNLLRQWSDT.

A Fe2OG dioxygenase domain is found at 80–180; it reads IVYPPMFNRY…RVGCFFWIQS (101 aa). Residues His-98, Asp-100, and His-161 each coordinate Fe cation. Arg-171 contributes to the 2-oxoglutarate binding site.

Fe(2+) serves as cofactor. It depends on L-ascorbate as a cofactor.

In Cupriavidus metallidurans (strain ATCC 43123 / DSM 2839 / NBRC 102507 / CH34) (Ralstonia metallidurans), this protein is PKHD-type hydroxylase Rmet_3078.